We begin with the raw amino-acid sequence, 616 residues long: Dihydroxy-acid dehydratase (616 aa).

D81 serves as a coordination point for Mg(2+). C122 provides a ligand contact to [2Fe-2S] cluster. Mg(2+)-binding residues include D123 and K124. K124 is modified (N6-carboxylysine). Residue C195 coordinates [2Fe-2S] cluster. Position 491 (E491) interacts with Mg(2+). The active-site Proton acceptor is S517.

This sequence belongs to the IlvD/Edd family. Homodimer. [2Fe-2S] cluster serves as cofactor. It depends on Mg(2+) as a cofactor.

The catalysed reaction is (2R)-2,3-dihydroxy-3-methylbutanoate = 3-methyl-2-oxobutanoate + H2O. It carries out the reaction (2R,3R)-2,3-dihydroxy-3-methylpentanoate = (S)-3-methyl-2-oxopentanoate + H2O. The protein operates within amino-acid biosynthesis; L-isoleucine biosynthesis; L-isoleucine from 2-oxobutanoate: step 3/4. Its pathway is amino-acid biosynthesis; L-valine biosynthesis; L-valine from pyruvate: step 3/4. Its function is as follows. Functions in the biosynthesis of branched-chain amino acids. Catalyzes the dehydration of (2R,3R)-2,3-dihydroxy-3-methylpentanoate (2,3-dihydroxy-3-methylvalerate) into 2-oxo-3-methylpentanoate (2-oxo-3-methylvalerate) and of (2R)-2,3-dihydroxy-3-methylbutanoate (2,3-dihydroxyisovalerate) into 2-oxo-3-methylbutanoate (2-oxoisovalerate), the penultimate precursor to L-isoleucine and L-valine, respectively. The polypeptide is Dihydroxy-acid dehydratase (Pectobacterium carotovorum subsp. carotovorum (strain PC1)).